Reading from the N-terminus, the 209-residue chain is Uracil phosphoribosyltransferase (209 aa).

Residues arginine 79, arginine 104, and 131–139 contribute to the 5-phospho-alpha-D-ribose 1-diphosphate site; that span reads DPMLATGGS. Residues isoleucine 194 and 199–201 each bind uracil; that span reads GDA. Position 200 (aspartate 200) interacts with 5-phospho-alpha-D-ribose 1-diphosphate.

The protein belongs to the UPRTase family. It depends on Mg(2+) as a cofactor.

The catalysed reaction is UMP + diphosphate = 5-phospho-alpha-D-ribose 1-diphosphate + uracil. The protein operates within pyrimidine metabolism; UMP biosynthesis via salvage pathway; UMP from uracil: step 1/1. With respect to regulation, allosterically activated by GTP. Catalyzes the conversion of uracil and 5-phospho-alpha-D-ribose 1-diphosphate (PRPP) to UMP and diphosphate. This is Uracil phosphoribosyltransferase from Clostridioides difficile (strain 630) (Peptoclostridium difficile).